We begin with the raw amino-acid sequence, 333 residues long: Cell division protein FtsQ (333 aa).

A disordered region spans residues 1 to 99; that stretch reads MTGTGPHGDP…ARREAKRRAV (99 aa). At 1–118 the chain is on the cytoplasmic side; it reads MTGTGPHGDP…VPRNTIRGLK (118 aa). A compositionally biased stretch (acidic residues) spans 11-22; that stretch reads AEDPAGPDDTAA. A compositionally biased stretch (low complexity) spans 44–57; that stretch reads TTETTAQTGTTAEA. Residues 73–92 are compositionally biased toward basic and acidic residues; sequence ERAERRAARDRAMAIEQARR. Residues 119-139 traverse the membrane as a helical segment; that stretch reads VLMWAALVSVLAVALGLLLYF. Residues 140-333 lie on the Extracellular side of the membrane; the sequence is TPIMSARNVE…VSSPDLPTVK (194 aa). A POTRA domain is found at 143–211; the sequence is MSARNVEVSG…STLKISIVER (69 aa).

The protein belongs to the FtsQ/DivIB family. FtsQ subfamily.

The protein localises to the cell membrane. Functionally, essential cell division protein. This chain is Cell division protein FtsQ, found in Mycolicibacterium smegmatis (strain ATCC 700084 / mc(2)155) (Mycobacterium smegmatis).